The chain runs to 344 residues: N-acetyl-gamma-glutamyl-phosphate reductase (344 aa).

Cysteine 150 is an active-site residue.

This sequence belongs to the NAGSA dehydrogenase family. Type 1 subfamily.

Its subcellular location is the cytoplasm. It carries out the reaction N-acetyl-L-glutamate 5-semialdehyde + phosphate + NADP(+) = N-acetyl-L-glutamyl 5-phosphate + NADPH + H(+). It participates in amino-acid biosynthesis; L-arginine biosynthesis; N(2)-acetyl-L-ornithine from L-glutamate: step 3/4. In terms of biological role, catalyzes the NADPH-dependent reduction of N-acetyl-5-glutamyl phosphate to yield N-acetyl-L-glutamate 5-semialdehyde. This is N-acetyl-gamma-glutamyl-phosphate reductase from Azotobacter vinelandii (strain DJ / ATCC BAA-1303).